Here is a 258-residue protein sequence, read N- to C-terminus: Triosephosphate isomerase (258 aa).

Substrate is bound at residue 11–13 (NWK). H101 functions as the Electrophile in the catalytic mechanism. E173 (proton acceptor) is an active-site residue. Substrate is bound by residues G179, S219, and 240–241 (GG).

It belongs to the triosephosphate isomerase family. Homodimer.

Its subcellular location is the cytoplasm. It catalyses the reaction D-glyceraldehyde 3-phosphate = dihydroxyacetone phosphate. It participates in carbohydrate biosynthesis; gluconeogenesis. The protein operates within carbohydrate degradation; glycolysis; D-glyceraldehyde 3-phosphate from glycerone phosphate: step 1/1. Involved in the gluconeogenesis. Catalyzes stereospecifically the conversion of dihydroxyacetone phosphate (DHAP) to D-glyceraldehyde-3-phosphate (G3P). This is Triosephosphate isomerase from Streptomyces coelicolor (strain ATCC BAA-471 / A3(2) / M145).